Here is a 1385-residue protein sequence, read N- to C-terminus: DNA-directed RNA polymerase subunit beta (1385 aa).

It belongs to the RNA polymerase beta chain family. As to quaternary structure, the RNAP catalytic core consists of 2 alpha, 1 beta, 1 beta' and 1 omega subunit. When a sigma factor is associated with the core the holoenzyme is formed, which can initiate transcription.

It carries out the reaction RNA(n) + a ribonucleoside 5'-triphosphate = RNA(n+1) + diphosphate. Functionally, DNA-dependent RNA polymerase catalyzes the transcription of DNA into RNA using the four ribonucleoside triphosphates as substrates. This chain is DNA-directed RNA polymerase subunit beta, found in Sulfurovum sp. (strain NBC37-1).